A 461-amino-acid chain; its full sequence is Probable outer membrane lipoprotein SilC (461 aa).

An N-terminal signal peptide occupies residues 1-17 (MFKLKLLSISTIFILAG). Cys18 carries the N-palmitoyl cysteine lipid modification. Cys18 carries the S-diacylglycerol cysteine lipid modification.

The protein belongs to the outer membrane factor (OMF) (TC 1.B.17) family.

The protein resides in the cell outer membrane. Component of the sil cation-efflux system that confers resistance to silver. May be part of a three-component cation/proton antiporter. In Salmonella typhimurium, this protein is Probable outer membrane lipoprotein SilC (silC).